A 265-amino-acid polypeptide reads, in one-letter code: Apolipoprotein A-I (265 aa).

Residues 1 to 18 (MKAVVLTLAVLFLTGSQA) form the signal peptide. Repeat copies occupy residues 67–88 (LKLLDNWDSLGSTFTKVREQLG) and 89–110 (PVTQEFWDNLEKETEALRQEMS). Positions 67-265 (LKLLDNWDSL…DEASKKLNAQ (199 aa)) are 10 X approximate tandem repeats. Met109 carries the methionine sulfoxide modification. A 3; half-length repeat occupies 111-121 (KDLEEVKKKVQ). 5 tandem repeats follow at residues 122-142 (PYLDDFQNKWQEEMETYRQKM), 144-165 (PLGAEFREGARQKVQELQEKLS), 166-187 (PLAEELRDRLRAHVEALRQHVA), 188-209 (PYSDDLRQRMAARFEALKEGGG), and 210-230 (SLAEYQAKAQEQLKALGEKAK). Met135 is modified (methionine sulfoxide). A 9; half-length repeat occupies 231 to 241 (PALEDLRQGLL). Copy 10 of the repeat occupies 242–265 (PVLENLKVSILAAIDEASKKLNAQ).

Belongs to the apolipoprotein A1/A4/E family. In terms of assembly, homodimer. Interacts with APOA1BP and CLU. Component of a sperm activating protein complex (SPAP), consisting of APOA1, an immunoglobulin heavy chain, an immunoglobulin light chain and albumin. Interacts with NDRG1. Interacts with SCGB3A2. Interacts with NAXE and YJEFN3. Post-translationally, glycosylated. Palmitoylated. In terms of processing, phosphorylation sites are present in the extracellular medium. As to expression, major protein of plasma HDL, also found in chylomicrons. Synthesized predominantly in the intestine and the liver.

The protein localises to the secreted. In terms of biological role, participates in the reverse transport of cholesterol from tissues to the liver for excretion by promoting cholesterol efflux from tissues and by acting as a cofactor for the lecithin cholesterol acyltransferase (LCAT). As part of the SPAP complex, activates spermatozoa motility. The sequence is that of Apolipoprotein A-I (APOA1) from Sus scrofa (Pig).